A 1070-amino-acid chain; its full sequence is DNA-directed RNA polymerase subunit beta (1070 aa).

It belongs to the RNA polymerase beta chain family. In terms of assembly, in plastids the minimal PEP RNA polymerase catalytic core is composed of four subunits: alpha, beta, beta', and beta''. When a (nuclear-encoded) sigma factor is associated with the core the holoenzyme is formed, which can initiate transcription.

It localises to the plastid. The protein localises to the chloroplast. The enzyme catalyses RNA(n) + a ribonucleoside 5'-triphosphate = RNA(n+1) + diphosphate. In terms of biological role, DNA-dependent RNA polymerase catalyzes the transcription of DNA into RNA using the four ribonucleoside triphosphates as substrates. The protein is DNA-directed RNA polymerase subunit beta of Gossypium hirsutum (Upland cotton).